Here is a 429-residue protein sequence, read N- to C-terminus: 3-phosphoshikimate 1-carboxyvinyltransferase (429 aa).

3-phosphoshikimate contacts are provided by lysine 11, serine 12, and arginine 16. A phosphoenolpyruvate-binding site is contributed by lysine 11. Phosphoenolpyruvate-binding residues include glycine 82 and arginine 110. Residues serine 155, glutamine 157, aspartate 302, and lysine 329 each coordinate 3-phosphoshikimate. Glutamine 157 is a phosphoenolpyruvate binding site. Aspartate 302 (proton acceptor) is an active-site residue. Phosphoenolpyruvate-binding residues include arginine 333 and arginine 385.

This sequence belongs to the EPSP synthase family. As to quaternary structure, monomer.

It localises to the cytoplasm. The catalysed reaction is 3-phosphoshikimate + phosphoenolpyruvate = 5-O-(1-carboxyvinyl)-3-phosphoshikimate + phosphate. It functions in the pathway metabolic intermediate biosynthesis; chorismate biosynthesis; chorismate from D-erythrose 4-phosphate and phosphoenolpyruvate: step 6/7. Its function is as follows. Catalyzes the transfer of the enolpyruvyl moiety of phosphoenolpyruvate (PEP) to the 5-hydroxyl of shikimate-3-phosphate (S3P) to produce enolpyruvyl shikimate-3-phosphate and inorganic phosphate. The protein is 3-phosphoshikimate 1-carboxyvinyltransferase of Helicobacter pylori (strain HPAG1).